A 465-amino-acid polypeptide reads, in one-letter code: ATP-dependent RNA helicase ddx19 (465 aa).

Positions 1–20 (MSEKETNTTSTENKEKEKQE) are enriched in basic and acidic residues. The interval 1 to 45 (MSEKETNTTSTENKEKEKQEQTNTNSTTESTNNQVDEEYERPGRS) is disordered. Positions 21–34 (QTNTNSTTESTNNQ) are enriched in low complexity. The Q motif signature appears at 70–98 (KTFEELGLKPELLKGVYAMGYNKPSKIQE). A Helicase ATP-binding domain is found at 102–268 (PIIIQSPNNL…KKIVQDPYTS (167 aa)). 115–122 (SQSGTGKT) contributes to the ATP binding site. The DEAD box signature appears at 215–218 (DEAD). A Helicase C-terminal domain is found at 297 to 449 (ILSDIYGFIS…ELKSSEIESL (153 aa)).

The protein belongs to the DEAD box helicase family. DDX19/DBP5 subfamily.

It carries out the reaction ATP + H2O = ADP + phosphate + H(+). In terms of biological role, ATP-binding RNA helicase required for normal differentiation and development. This Dictyostelium discoideum (Social amoeba) protein is ATP-dependent RNA helicase ddx19 (helC).